The sequence spans 214 residues: NADH-quinone oxidoreductase subunit C (214 aa).

The protein belongs to the complex I 30 kDa subunit family. As to quaternary structure, NDH-1 is composed of 14 different subunits. Subunits NuoB, C, D, E, F, and G constitute the peripheral sector of the complex.

The protein localises to the cell inner membrane. It carries out the reaction a quinone + NADH + 5 H(+)(in) = a quinol + NAD(+) + 4 H(+)(out). In terms of biological role, NDH-1 shuttles electrons from NADH, via FMN and iron-sulfur (Fe-S) centers, to quinones in the respiratory chain. The immediate electron acceptor for the enzyme in this species is believed to be ubiquinone. Couples the redox reaction to proton translocation (for every two electrons transferred, four hydrogen ions are translocated across the cytoplasmic membrane), and thus conserves the redox energy in a proton gradient. The chain is NADH-quinone oxidoreductase subunit C from Francisella tularensis subsp. holarctica (strain LVS).